The sequence spans 236 residues: Leucyl/phenylalanyl-tRNA--protein transferase (236 aa).

It belongs to the L/F-transferase family.

It localises to the cytoplasm. The catalysed reaction is N-terminal L-lysyl-[protein] + L-leucyl-tRNA(Leu) = N-terminal L-leucyl-L-lysyl-[protein] + tRNA(Leu) + H(+). It carries out the reaction N-terminal L-arginyl-[protein] + L-leucyl-tRNA(Leu) = N-terminal L-leucyl-L-arginyl-[protein] + tRNA(Leu) + H(+). It catalyses the reaction L-phenylalanyl-tRNA(Phe) + an N-terminal L-alpha-aminoacyl-[protein] = an N-terminal L-phenylalanyl-L-alpha-aminoacyl-[protein] + tRNA(Phe). Its function is as follows. Functions in the N-end rule pathway of protein degradation where it conjugates Leu, Phe and, less efficiently, Met from aminoacyl-tRNAs to the N-termini of proteins containing an N-terminal arginine or lysine. In Shewanella sp. (strain MR-4), this protein is Leucyl/phenylalanyl-tRNA--protein transferase.